A 445-amino-acid chain; its full sequence is Phosphoglucosamine mutase (445 aa).

S103 functions as the Phosphoserine intermediate in the catalytic mechanism. 4 residues coordinate Mg(2+): S103, D240, D242, and D244. Phosphoserine is present on S103.

The protein belongs to the phosphohexose mutase family. Requires Mg(2+) as cofactor. In terms of processing, activated by phosphorylation.

The enzyme catalyses alpha-D-glucosamine 1-phosphate = D-glucosamine 6-phosphate. In terms of biological role, catalyzes the conversion of glucosamine-6-phosphate to glucosamine-1-phosphate. The protein is Phosphoglucosamine mutase of Cellvibrio japonicus (strain Ueda107) (Pseudomonas fluorescens subsp. cellulosa).